The primary structure comprises 170 residues: Transmembrane protein 252 (170 aa).

The next 2 helical transmembrane spans lie at 8 to 28 (ILCA…AFFI) and 40 to 60 (LIAA…GIFW). Positions 112 to 147 (CPAEREASGIPPPLYTETGLEFQDGNDSHPEAPPSY) are disordered.

It is found in the membrane. The polypeptide is Transmembrane protein 252 (TMEM252) (Homo sapiens (Human)).